We begin with the raw amino-acid sequence, 250 residues long: Histone H1.1 (250 aa).

Over residues 1 to 11 the composition is skewed to polar residues; that stretch reads MSDSAVATSAS. Disordered stretches follow at residues 1 to 52 and 104 to 250; these read MSDS…QQMV and QTKG…ATKK. The region spanning 44-118 is the H15 domain; that stretch reads SHPPTQQMVD…GASGSFKLSA (75 aa). Basic and acidic residues predominate over residues 122–133; that stretch reads KDAKPKASAVEK. Low complexity predominate over residues 140-161; that stretch reads ASAARATKSKSSTSTTKKAAGA. The segment covering 174–191 has biased composition (basic and acidic residues); that stretch reads KNVEKKKADKEKAKDAKK. The span at 192–234 shows a compositional bias: low complexity; it reads TGTIKAKPTTAKAKSSATKPKTPKPKTTSAKPKKVVSATTPKK. Over residues 235–250 the composition is skewed to basic residues; that stretch reads TAVKKPKAKTASATKK.

The protein belongs to the histone H1/H5 family.

Its subcellular location is the nucleus. It is found in the chromosome. Its function is as follows. Histones H1 are necessary for the condensation of nucleosome chains into higher-order structures. The protein is Histone H1.1 (His1.1) of Drosophila virilis (Fruit fly).